Reading from the N-terminus, the 189-residue chain is ATP synthase subunit b (189 aa).

Residues 25–45 (LPVWPEVVIGLICFGIVFFVF) traverse the membrane as a helical segment.

This sequence belongs to the ATPase B chain family. In terms of assembly, F-type ATPases have 2 components, F(1) - the catalytic core - and F(0) - the membrane proton channel. F(1) has five subunits: alpha(3), beta(3), gamma(1), delta(1), epsilon(1). F(0) has three main subunits: a(1), b(2) and c(10-14). The alpha and beta chains form an alternating ring which encloses part of the gamma chain. F(1) is attached to F(0) by a central stalk formed by the gamma and epsilon chains, while a peripheral stalk is formed by the delta and b chains.

The protein localises to the cell membrane. In terms of biological role, f(1)F(0) ATP synthase produces ATP from ADP in the presence of a proton or sodium gradient. F-type ATPases consist of two structural domains, F(1) containing the extramembraneous catalytic core and F(0) containing the membrane proton channel, linked together by a central stalk and a peripheral stalk. During catalysis, ATP synthesis in the catalytic domain of F(1) is coupled via a rotary mechanism of the central stalk subunits to proton translocation. Component of the F(0) channel, it forms part of the peripheral stalk, linking F(1) to F(0). The polypeptide is ATP synthase subunit b (Streptomyces griseus subsp. griseus (strain JCM 4626 / CBS 651.72 / NBRC 13350 / KCC S-0626 / ISP 5235)).